The chain runs to 836 residues: MIAELVSSALGLALYLNTLSADFCYDDSRAIKTNQDLLPETPWTHIFYNDFWGTLLTHSGSHKSYRPLCTLSFRLNHAIGGLNPWSYHLVNVLLHAAVTGLFTRFSKALLGDGYWTFMAGLMFASHPIHTEAVAGIVGRADVGASLFFLLSLLCYIKHCSTRGYSARTWGWFLGTGLCAGCSMLWKEQGVTVLAVSAVYDVFVFHRLKMKQILPTIYKRKNLSLFLSISLLTFWGTCLLGARLYWMGNKPPSFSNSDNPAADSDSLLARTLTFLYLPTKNLWLLLCPDTLSFDWSMDAVPLLKTVCDWRNLHTVAFYSGLLLLAYCGLKNPSLEGECNGKALTNGKQNANGHSCHSDVEYRNSEMKPSFASKVENGIKNCVPQRTQLPSTENIVILSLSLLIIPFIPATNLFFYVGFVIAERVLYIPSMGFCLLITVGARALYVKVQKRFLKSLVFYATATLIVFYGVKTAIRNGDWQNEEMLYRSGIKVNPAKAWGNLGNVLKSQSKISEAESAYRNALFYRSNMADMLYNLGLLLQENSRFAEALHYYKLAIGSRPTLASAYLNTGIILMNQGKTEEARRTFLKCSEIPDENLKDPHAHKSSVTSCLYNLGKLYHEQGRYEEALSVYREAIQKMPRHFAPQSLYNMMGEAYMRLSKLPEAEHWYMESLRSKTDHIPAHLTYGKLLALTGRKSEAEKFFLKAIELDPTKGNCYMHYGQFLLEESRLTEAAEMAKKAAELDNTEFDVVFNAAHMLRQASLNEAAEKYYDLAARLRPNYPAALMNLGAILHLNGRLQKAEANYLRALQLKPDDVITQSNLRKLWNIMEKQGLKTSKT.

The helical transmembrane segment at 1-21 (MIAELVSSALGLALYLNTLSA) threads the bilayer. Over 22 to 77 (DFCYDDSRAIKTNQDLLPETPWTHIFYNDFWGTLLTHSGSHKSYRPLCTLSFRLNH) the chain is Extracellular. Residues 78 to 98 (AIGGLNPWSYHLVNVLLHAAV) form a helical membrane-spanning segment. Residues 99–107 (TGLFTRFSK) are Cytoplasmic-facing. Residues 108 to 128 (ALLGDGYWTFMAGLMFASHPI) form a helical membrane-spanning segment. Over 129-132 (HTEA) the chain is Extracellular. A helical transmembrane segment spans residues 133-153 (VAGIVGRADVGASLFFLLSLL). The Cytoplasmic portion of the chain corresponds to 154 to 168 (CYIKHCSTRGYSART). The next 2 helical transmembrane spans lie at 169–184 (WGWFLGTGLCAGCSML) and 185–204 (WKEQGVTVLAVSAVYDVFVF). Residues 205–220 (HRLKMKQILPTIYKRK) lie on the Cytoplasmic side of the membrane. The helical transmembrane segment at 221-241 (NLSLFLSISLLTFWGTCLLGA) threads the bilayer. Topologically, residues 242 to 312 (RLYWMGNKPP…KTVCDWRNLH (71 aa)) are extracellular. A helical membrane pass occupies residues 313 to 333 (TVAFYSGLLLLAYCGLKNPSL). The Cytoplasmic portion of the chain corresponds to 334–392 (EGECNGKALTNGKQNANGHSCHSDVEYRNSEMKPSFASKVENGIKNCVPQRTQLPSTEN). Residues 393-415 (IVILSLSLLIIPFIPATNLFFYV) form a helical membrane-spanning segment. Residues 416–422 (GFVIAER) are Extracellular-facing. Residues 423-443 (VLYIPSMGFCLLITVGARALY) traverse the membrane as a helical segment. Residues 444-449 (VKVQKR) lie on the Cytoplasmic side of the membrane. The helical transmembrane segment at 450 to 470 (FLKSLVFYATATLIVFYGVKT) threads the bilayer. At 471–836 (AIRNGDWQNE…EKQGLKTSKT (366 aa)) the chain is on the extracellular side. 9 TPR repeats span residues 493 to 526 (AKAWGNLGNVLKSQSKISEAESAYRNALFYRSNM), 527 to 560 (ADMLYNLGLLLQENSRFAEALHYYKLAIGSRPTL), 561 to 594 (ASAYLNTGIILMNQGKTEEARRTFLKCSEIPDEN), 606 to 639 (TSCLYNLGKLYHEQGRYEEALSVYREAIQKMPRH), 643 to 676 (QSLYNMMGEAYMRLSKLPEAEHWYMESLRSKTDH), 677 to 710 (IPAHLTYGKLLALTGRKSEAEKFFLKAIELDPTK), 711 to 744 (GNCYMHYGQFLLEESRLTEAAEMAKKAAELDNTE), 745 to 778 (FDVVFNAAHMLRQASLNEAAEKYYDLAARLRPNY), and 779 to 812 (PAALMNLGAILHLNGRLQKAEANYLRALQLKPDD).

Belongs to the TMTC family.

It localises to the membrane. The protein localises to the endoplasmic reticulum. It carries out the reaction a di-trans,poly-cis-dolichyl beta-D-mannosyl phosphate + L-seryl-[protein] = 3-O-(alpha-D-mannosyl)-L-seryl-[protein] + a di-trans,poly-cis-dolichyl phosphate + H(+). The catalysed reaction is a di-trans,poly-cis-dolichyl beta-D-mannosyl phosphate + L-threonyl-[protein] = 3-O-(alpha-D-mannosyl)-L-threonyl-[protein] + a di-trans,poly-cis-dolichyl phosphate + H(+). The protein operates within protein modification; protein glycosylation. Functionally, transfers mannosyl residues to the hydroxyl group of serine or threonine residues. The 4 members of the TMTC family are O-mannosyl-transferases dedicated primarily to the cadherin superfamily, each member seems to have a distinct role in decorating the cadherin domains with O-linked mannose glycans at specific regions. Also acts as O-mannosyl-transferase on other proteins such as PDIA3. This Mus musculus (Mouse) protein is Protein O-mannosyl-transferase TMTC2.